A 434-amino-acid chain; its full sequence is Beta-enolase (434 aa).

A2 is modified (N-acetylalanine). The residue at position 72 (T72) is a Phosphothreonine. A phosphoserine mark is found at S83 and S157. 2 residues coordinate substrate: H158 and E167. S176 carries the post-translational modification Phosphoserine. T205 carries the phosphothreonine modification. Catalysis depends on E210, which acts as the Proton donor. T229 is subject to Phosphothreonine. Y236 carries the post-translational modification Phosphotyrosine. A Mg(2+)-binding site is contributed by D245. Residue S263 is modified to Phosphoserine. Residues E293 and D318 each contribute to the substrate site. Positions 293 and 318 each coordinate Mg(2+). The Proton acceptor role is filled by K343. Residues 370–373 (SHRS) and K394 each bind substrate.

It belongs to the enolase family. Mammalian enolase is composed of 3 isozyme subunits, alpha, beta and gamma, which can form homodimers or heterodimers which are cell-type and development-specific. Interacts with PNKD. Mg(2+) is required as a cofactor.

It localises to the cytoplasm. It catalyses the reaction (2R)-2-phosphoglycerate = phosphoenolpyruvate + H2O. Its pathway is carbohydrate degradation; glycolysis; pyruvate from D-glyceraldehyde 3-phosphate: step 4/5. Functionally, glycolytic enzyme that catalyzes the conversion of 2-phosphoglycerate to phosphoenolpyruvate. Appears to have a function in striated muscle development and regeneration. The polypeptide is Beta-enolase (ENO3) (Sus scrofa (Pig)).